The primary structure comprises 510 residues: O-acetyltransferase pyr7 (510 aa).

Belongs to the fumigaclavine B O-acetyltransferase family.

It functions in the pathway secondary metabolite biosynthesis; terpenoid biosynthesis. Its function is as follows. O-acetyltransferase; part of the gene cluster that mediates the biosynthesis of pyripyropene A, a specific human acyl-coenzyme A:cholesterol acyltransferase 2 inhibitor. The first step of the pathway is the synthesis of nicotinyl-CoA from nicotinic acid by the nicotinic acid-CoA ligase pyr1. Nicotinyl-CoA is then a substrate of polyketide synthase pyr2 to produce 4-hydroxy-6-(3-pyridinyl)-2H-pyran-2-one (HPPO) which is further prenylated by the polyprenyl transferase pyr6 to yield farnesyl-HPPO. The next steps consist of an epoxidation of farnesyl-HPPO to epoxyfarnesyl-HPPO by FAD-dependent monooxygenase pyr5 and a cyclization of the terpenoid portion by the terpene cyclase pyr4 to yield deacetyl-pyripyropene E. The 2 cytochrome P450 monooxygenases pyr3 and pyr9, and the 2 acetyltransferases pyr7 and pyr8 are involved in the conversion of deacetyl-pyripyropene E into pyripyropene A through several cycles of oxidation and acetylation steps. Pyr7 acetylates deacetyl-pyripyropene E to pyripyropene E which is oxidized to 11-deacetyl-pyripyropene O by pyr3, which is in turn acetylated into pyripyropene O by pyr8. Pyripyropene O is then oxidized to deacetyl-pyripyropene A by pyr9. Deacetyl-pyripyropene A is finally acetylated to pyripyropene A by pyr8. The polypeptide is O-acetyltransferase pyr7 (Aspergillus fumigatus (strain ATCC MYA-4609 / CBS 101355 / FGSC A1100 / Af293) (Neosartorya fumigata)).